The sequence spans 681 residues: DNA ligase (681 aa).

NAD(+)-binding positions include 44-48 (DYIYD), 94-95 (SL), and Glu-124. Lys-126 functions as the N6-AMP-lysine intermediate in the catalytic mechanism. NAD(+)-binding residues include Arg-147, Glu-181, Lys-297, and Lys-321. 4 residues coordinate Zn(2+): Cys-415, Cys-418, Cys-433, and Cys-438. The 84-residue stretch at 598-681 (DETSFFYGKK…EAQAKEGTDK (84 aa)) folds into the BRCT domain.

This sequence belongs to the NAD-dependent DNA ligase family. LigA subfamily. Mg(2+) serves as cofactor. Requires Mn(2+) as cofactor.

It catalyses the reaction NAD(+) + (deoxyribonucleotide)n-3'-hydroxyl + 5'-phospho-(deoxyribonucleotide)m = (deoxyribonucleotide)n+m + AMP + beta-nicotinamide D-nucleotide.. Its function is as follows. DNA ligase that catalyzes the formation of phosphodiester linkages between 5'-phosphoryl and 3'-hydroxyl groups in double-stranded DNA using NAD as a coenzyme and as the energy source for the reaction. It is essential for DNA replication and repair of damaged DNA. In Leuconostoc citreum (strain KM20), this protein is DNA ligase.